A 288-amino-acid chain; its full sequence is Quinate/shikimate dehydrogenase (288 aa).

Lys-71 and Asp-107 together coordinate substrate. Residues 132–135, 155–158, Lys-205, 232–235, and Gly-255 each bind NAD(+); these read AGGA, NRKD, and CVYN.

This sequence belongs to the shikimate dehydrogenase family. As to quaternary structure, homodimer.

The catalysed reaction is L-quinate + NAD(+) = 3-dehydroquinate + NADH + H(+). The enzyme catalyses L-quinate + NADP(+) = 3-dehydroquinate + NADPH + H(+). It carries out the reaction shikimate + NADP(+) = 3-dehydroshikimate + NADPH + H(+). It catalyses the reaction shikimate + NAD(+) = 3-dehydroshikimate + NADH + H(+). It participates in metabolic intermediate biosynthesis; chorismate biosynthesis; chorismate from D-erythrose 4-phosphate and phosphoenolpyruvate: step 4/7. Its function is as follows. The actual biological function of YdiB remains unclear, nor is it known whether 3-dehydroshikimate or quinate represents the natural substrate. Catalyzes the reversible NAD-dependent reduction of both 3-dehydroshikimate (DHSA) and 3-dehydroquinate to yield shikimate (SA) and quinate, respectively. It can use both NAD or NADP for catalysis, however it has higher catalytic efficiency with NAD. The chain is Quinate/shikimate dehydrogenase from Salmonella agona (strain SL483).